Consider the following 426-residue polypeptide: Histidine--tRNA ligase 1 (426 aa).

The protein belongs to the class-II aminoacyl-tRNA synthetase family. As to quaternary structure, homodimer.

The protein localises to the cytoplasm. The enzyme catalyses tRNA(His) + L-histidine + ATP = L-histidyl-tRNA(His) + AMP + diphosphate + H(+). The polypeptide is Histidine--tRNA ligase 1 (Shouchella clausii (strain KSM-K16) (Alkalihalobacillus clausii)).